A 363-amino-acid chain; its full sequence is Peptide chain release factor 2 (363 aa).

Residue Gln-251 is modified to N5-methylglutamine.

This sequence belongs to the prokaryotic/mitochondrial release factor family. In terms of processing, methylated by PrmC. Methylation increases the termination efficiency of RF2.

The protein resides in the cytoplasm. In terms of biological role, peptide chain release factor 2 directs the termination of translation in response to the peptide chain termination codons UGA and UAA. The polypeptide is Peptide chain release factor 2 (prfB) (Helicobacter pylori (strain ATCC 700392 / 26695) (Campylobacter pylori)).